The primary structure comprises 85 residues: Augerpeptide-s6a (85 aa).

A signal peptide spans 1 to 20 (MTLTMSTVVFFSLILLTLGL). Positions 21 to 43 (QPKDKDEGVMGRSRLGKRGLLMR) are excised as a propeptide. Cystine bridges form between cysteine 54–cysteine 65, cysteine 58–cysteine 70, and cysteine 64–cysteine 81.

In terms of tissue distribution, expressed by the venom duct.

The protein resides in the secreted. The sequence is that of Augerpeptide-s6a from Terebra subulata (Chocolate spotted auger).